The following is a 963-amino-acid chain: Iron-responsive element-binding protein 2 (963 aa).

The [4Fe-4S] cluster site is built by Cys512, Cys578, and Cys581.

Belongs to the aconitase/IPM isomerase family. Interacts with RBCK1 isoform 1 and isoform 2 only in iron-rich conditions. Interacts (when associated with the 4Fe-4S) with FBXL5. Interacts with CIAO1 and CIAO2A. It depends on [4Fe-4S] cluster as a cofactor. Post-translationally, ubiquitinated and degraded by the proteasome in presence of high level of iron and oxygen. Ubiquitinated by a SCF complex containing FBXL5. Upon iron and oxygen depletion FBXL5 is degraded, preventing ubiquitination and allowing its RNA-binding activity.

It is found in the cytoplasm. Its function is as follows. RNA-binding protein that binds to iron-responsive elements (IRES), which are stem-loop structures found in the 5'-UTR of ferritin, and delta aminolevulinic acid synthase mRNAs, and in the 3'-UTR of transferrin receptor mRNA. Binding to the IRE element in ferritin results in the repression of its mRNA translation. Binding of the protein to the transferrin receptor mRNA inhibits the degradation of this otherwise rapidly degraded mRNA. In Homo sapiens (Human), this protein is Iron-responsive element-binding protein 2 (IREB2).